Here is a 276-residue protein sequence, read N- to C-terminus: Large ribosomal subunit protein uL2 (276 aa).

The disordered stretch occupies residues 221 to 276; the sequence is RGSAMNPNDHPHGGGEGRAPIGRKSPMTPWGKKARGIKTRDRKKSSNELIIRRRTK. Over residues 252-263 the composition is skewed to basic residues; the sequence is KKARGIKTRDRK.

It belongs to the universal ribosomal protein uL2 family. In terms of assembly, part of the 50S ribosomal subunit. Forms a bridge to the 30S subunit in the 70S ribosome.

Functionally, one of the primary rRNA binding proteins. Required for association of the 30S and 50S subunits to form the 70S ribosome, for tRNA binding and peptide bond formation. It has been suggested to have peptidyltransferase activity; this is somewhat controversial. Makes several contacts with the 16S rRNA in the 70S ribosome. This is Large ribosomal subunit protein uL2 from Phytoplasma australiense.